The sequence spans 289 residues: Acetylglutamate kinase (289 aa).

Substrate is bound by residues 60–61, Arg82, and Asn182; that span reads GG.

The protein belongs to the acetylglutamate kinase family. ArgB subfamily.

It localises to the cytoplasm. The catalysed reaction is N-acetyl-L-glutamate + ATP = N-acetyl-L-glutamyl 5-phosphate + ADP. It participates in amino-acid biosynthesis; L-arginine biosynthesis; N(2)-acetyl-L-ornithine from L-glutamate: step 2/4. Functionally, catalyzes the ATP-dependent phosphorylation of N-acetyl-L-glutamate. This is Acetylglutamate kinase from Methanothrix thermoacetophila (strain DSM 6194 / JCM 14653 / NBRC 101360 / PT) (Methanosaeta thermophila).